Consider the following 469-residue polypeptide: Transcription factor E2FB (469 aa).

Disordered regions lie at residues 1 to 28 (MSEE…PPLV) and 84 to 118 (QTPV…AGSP). 2 stretches are compositionally biased toward polar residues: residues 8–22 (QFPS…SLSS) and 100–118 (SAKS…AGSP). A DNA-binding region spans residues 129–194 (RYDSSLGLLT…TLKNRIQWKG (66 aa)). Residues 202 to 246 (ETIESIANLQDEVQNLAAEEARLDDQIRESQERLTSLSEDENNKR) adopt a coiled-coil conformation. The tract at residues 210 to 238 (LQDEVQNLAAEEARLDDQIRESQERLTSL) is leucine-zipper. The segment at 319–374 (PQADEPSNVPDEPSNVPDVPSNLPSTSGLPENHDVSMPMKEESTERNMETQEVDDT) is disordered. Basic and acidic residues predominate over residues 349-374 (ENHDVSMPMKEESTERNMETQEVDDT). The retinoblastoma protein binding stretch occupies residues 403–419 (DYWFRSEVGEVSITDMW). A disordered region spans residues 426–469 (DWNQMITFDQDHAGPSDNKILEQPQTPSSPTPEESTATRSPTGS). The segment covering 447-469 (EQPQTPSSPTPEESTATRSPTGS) has biased composition (low complexity).

It belongs to the E2F/DP family. In terms of assembly, heterodimer with DP proteins. Interacts (via dimerization domain) preferentially with DPA, but also with DPB. Interacts with PURA1 and retinoblastoma-related protein RBR1. Component of a DREAM-like complex which modulates a variety of developmentally regulated genes and of the mitotic genes in proliferating and differentiated cells. Interacts with MYB3R4 only at early stages of leaves development. Post-translationally, phosphorylated. In terms of tissue distribution, expressed in proliferating cells and several differentiated tissues. Detected in inflorescence and shoot apical meristems, cotyledonary vascular tissues, leaf primordia, young leaves, base of trichomes, central cylinder and elongation zone of roots, lateral root primordia, flowers, pistils of immature flowers and pollen grains.

It is found in the cytoplasm. The protein resides in the nucleus. In terms of biological role, transcription activator that binds DNA cooperatively with DP proteins through the E2 recognition site, 5'-TTTC[CG]CGC-3' found in the promoter region of a number of genes whose products are involved in cell cycle regulation or in DNA replication. The binding of retinoblastoma-related proteins represses transactivation. Involved in the control of cell-cycle progression from G1 to S phase and from G2 to M phase. Stimulates cell proliferation and delays differentiation. Represses cell enlargement and endoreduplication in auxin-free conditions. In Arabidopsis thaliana (Mouse-ear cress), this protein is Transcription factor E2FB (E2FB).